Reading from the N-terminus, the 227-residue chain is Octanoyltransferase (227 aa).

One can recognise a BPL/LPL catalytic domain in the interval 34–212 (RQREDGLMLL…AFAEVFPVTW (179 aa)). Substrate contacts are provided by residues 76–83 (RGGEVTYH), 143–145 (AIA), and 156–158 (GFA). Residue cysteine 174 is the Acyl-thioester intermediate of the active site.

This sequence belongs to the LipB family.

Its subcellular location is the cytoplasm. The catalysed reaction is octanoyl-[ACP] + L-lysyl-[protein] = N(6)-octanoyl-L-lysyl-[protein] + holo-[ACP] + H(+). Its pathway is protein modification; protein lipoylation via endogenous pathway; protein N(6)-(lipoyl)lysine from octanoyl-[acyl-carrier-protein]: step 1/2. Its function is as follows. Catalyzes the transfer of endogenously produced octanoic acid from octanoyl-acyl-carrier-protein onto the lipoyl domains of lipoate-dependent enzymes. Lipoyl-ACP can also act as a substrate although octanoyl-ACP is likely to be the physiological substrate. This Synechocystis sp. (strain ATCC 27184 / PCC 6803 / Kazusa) protein is Octanoyltransferase.